A 78-amino-acid polypeptide reads, in one-letter code: Large ribosomal subunit protein bL28 (78 aa).

Residues 1–22 (MAKVCQVTGKRPVTGHNVSHAK) are disordered.

The protein belongs to the bacterial ribosomal protein bL28 family.

The polypeptide is Large ribosomal subunit protein bL28 (Teredinibacter turnerae (strain ATCC 39867 / T7901)).